The following is a 471-amino-acid chain: V-type ATP synthase beta chain (471 aa).

This sequence belongs to the ATPase alpha/beta chains family.

In terms of biological role, produces ATP from ADP in the presence of a proton gradient across the membrane. The V-type beta chain is a regulatory subunit. This is V-type ATP synthase beta chain from Streptococcus pyogenes serotype M18 (strain MGAS8232).